The following is a 630-amino-acid chain: Succinate dehydrogenase [ubiquinone] flavoprotein subunit, mitochondrial (630 aa).

A mitochondrion-targeting transit peptide spans methionine 1–leucine 31. FAD-binding positions include glycine 52–glycine 57, threonine 75–glycine 90, and aspartate 260. Histidine 83 bears the Tele-8alpha-FAD histidine mark. Histidine 281 and threonine 293 together coordinate substrate. Arginine 325 serves as the catalytic Proton acceptor. Histidine 392 is a binding site for substrate. Residue glutamate 426 coordinates FAD. Arginine 437 is a binding site for substrate. Position 442–443 (serine 442–leucine 443) interacts with FAD.

Belongs to the FAD-dependent oxidoreductase 2 family. FRD/SDH subfamily. As to quaternary structure, component of complex II composed of eight subunits in plants: four classical SDH subunits SDH1, SDH2, SDH3 and SDH4 (a flavoprotein (FP), an iron-sulfur protein (IP), and a cytochrome b composed of a large and a small subunit.), as well as four subunits unknown in mitochondria from bacteria and heterotrophic eukaryotes. Requires FAD as cofactor.

Its subcellular location is the mitochondrion inner membrane. The catalysed reaction is a quinone + succinate = fumarate + a quinol. The protein operates within carbohydrate metabolism; tricarboxylic acid cycle; fumarate from succinate (eukaryal route): step 1/1. Its function is as follows. Flavoprotein (FP) subunit of succinate dehydrogenase (SDH) that is involved in complex II of the mitochondrial electron transport chain and is responsible for transferring electrons from succinate to ubiquinone (coenzyme Q). This Oryza sativa subsp. japonica (Rice) protein is Succinate dehydrogenase [ubiquinone] flavoprotein subunit, mitochondrial (SDH1).